A 243-amino-acid chain; its full sequence is tRNA (guanine-N(1)-)-methyltransferase (243 aa).

S-adenosyl-L-methionine contacts are provided by residues Gly108 and Leu127–Leu132.

It belongs to the RNA methyltransferase TrmD family. In terms of assembly, homodimer.

It is found in the cytoplasm. The catalysed reaction is guanosine(37) in tRNA + S-adenosyl-L-methionine = N(1)-methylguanosine(37) in tRNA + S-adenosyl-L-homocysteine + H(+). Functionally, specifically methylates guanosine-37 in various tRNAs. This chain is tRNA (guanine-N(1)-)-methyltransferase, found in Streptococcus equi subsp. equi (strain 4047).